Here is a 204-residue protein sequence, read N- to C-terminus: Lymphotoxin-alpha (204 aa).

Residues 1–33 (MTPPGRLYLLRVCSTPPLLLLGLLLALPLEAQG) form the signal peptide. Residues 62 to 204 (PAAHLVGDPS…SSVFFGAFAL (143 aa)) enclose the THD domain. A glycan (N-linked (GlcNAc...) asparagine) is linked at N95. Cysteines 119 and 155 form a disulfide.

The protein belongs to the tumor necrosis factor family. In terms of assembly, homotrimer, and heterotrimer of either two LTB and one LTA subunits or (less prevalent) two LTA and one LTB subunits. Interacts with TNFRSF14.

It localises to the secreted. It is found in the membrane. Cytokine that in its homotrimeric form binds to TNFRSF1A/TNFR1, TNFRSF1B/TNFBR and TNFRSF14/HVEM. In its heterotrimeric form with LTB binds to TNFRSF3/LTBR. Lymphotoxin is produced by lymphocytes and is cytotoxic for a wide range of tumor cells in vitro and in vivo. The polypeptide is Lymphotoxin-alpha (LTA) (Bos taurus (Bovine)).